The sequence spans 191 residues: Small ribosomal subunit protein eS7y (191 aa).

An N-acetylmethionine modification is found at methionine 1. A coiled-coil region spans residues threonine 17–valine 50.

Belongs to the eukaryotic ribosomal protein eS7 family.

The protein is Small ribosomal subunit protein eS7y (RPS7B) of Arabidopsis thaliana (Mouse-ear cress).